A 112-amino-acid chain; its full sequence is 87 kDa annexin-binding protein (112 aa).

Binds annexin.

This chain is 87 kDa annexin-binding protein, found in Physarum polycephalum (Slime mold).